A 397-amino-acid chain; its full sequence is Lysophospholipid transporter LplT (397 aa).

Residues 1-17 (MSESVHTNTSLWSKGMK) lie on the Periplasmic side of the membrane. A helical transmembrane segment spans residues 18 to 38 (AVIVAQFLSAFGDNALLFATL). Topologically, residues 39-52 (ALLKAQFYPEWSQP) are cytoplasmic. A helical membrane pass occupies residues 53–73 (ILQMVFVGAYILFAPFVGQVA). At 74 to 90 (DSFAKGRVMMFANGLKL) the chain is on the periplasmic side. A helical membrane pass occupies residues 91 to 111 (LGAASICFGINPFLGYTLVGV). Residues 112 to 144 (GAAAYSPAKYGILGELTTGSKLVKANGLMEAST) lie on the Cytoplasmic side of the membrane. A helical transmembrane segment spans residues 145 to 165 (IAAILLGSVAGGVLADWHVLV). Residue Ala-166 is a topological domain, periplasmic. Residues 167 to 187 (LAACALAYGGAVVANIYIPKL) traverse the membrane as a helical segment. Topologically, residues 188–226 (AAARPGQSWNLINMTRSFLNACTSLWRNGETRFSLVGTS) are cytoplasmic. The chain crosses the membrane as a helical span at residues 227–247 (LFWGAGVTLRFLLVLWVPVAL). At 248–256 (GITDNATPT) the chain is on the periplasmic side. The helical transmembrane segment at 257 to 277 (YLNAMVAIGIVVGAGAAAKLV) threads the bilayer. Topologically, residues 278–280 (TLE) are cytoplasmic. A helical membrane pass occupies residues 281–301 (TVSRCMPAGILIGVVVLIFSL). Residues 302 to 304 (QHE) lie on the Periplasmic side of the membrane. Residues 305–325 (QLPAYALLMLIGVLGGFFVVP) form a helical membrane-spanning segment. The Cytoplasmic segment spans residues 326 to 343 (LNALLQERGKKSVGAGNA). Residues 344-364 (IAVQNLGENSAMLLMLGIYSL) form a helical membrane-spanning segment. Residues 365–366 (AV) are Periplasmic-facing. The chain crosses the membrane as a helical span at residues 367-387 (MVGIPVVPIGIGFGALFALAI). At 388 to 397 (TALWIWQRRH) the chain is on the cytoplasmic side.

Belongs to the major facilitator superfamily. LplT (TC 2.A.1.42) family.

It is found in the cell inner membrane. Its function is as follows. Catalyzes the facilitated diffusion of 2-acyl-glycero-3-phosphoethanolamine (2-acyl-GPE) into the cell. This chain is Lysophospholipid transporter LplT, found in Escherichia coli O157:H7 (strain EC4115 / EHEC).